The primary structure comprises 238 residues: tRNA (guanine-N(1)-)-methyltransferase (238 aa).

Residues Gly110 and 129-134 each bind S-adenosyl-L-methionine; that span reads LGDFIL.

This sequence belongs to the RNA methyltransferase TrmD family. As to quaternary structure, homodimer.

The protein resides in the cytoplasm. It carries out the reaction guanosine(37) in tRNA + S-adenosyl-L-methionine = N(1)-methylguanosine(37) in tRNA + S-adenosyl-L-homocysteine + H(+). Its function is as follows. Specifically methylates guanosine-37 in various tRNAs. The polypeptide is tRNA (guanine-N(1)-)-methyltransferase (Clostridium botulinum (strain Alaska E43 / Type E3)).